The chain runs to 445 residues: Homoserine dehydrogenase (445 aa).

NADPH is bound by residues Phe-26, Thr-28, and Val-29. NAD(+)-binding residues include Val-29 and Ala-58. Val-29 serves as a coordination point for NADP(+). Lys-119 contacts NADPH. Lys-119 lines the NADP(+) pocket. Residues Glu-143, Val-146, Gly-148, and Ile-150 each coordinate Na(+). The NADP(+) site is built by Gly-201 and Glu-204. L-homoserine contacts are provided by Glu-204 and Asp-215. Residue Lys-219 is the Proton donor of the active site. Gly-321 is a binding site for NADPH. Gly-321 serves as a coordination point for NAD(+). Gly-321 serves as a coordination point for NADP(+). The region spanning 368-445 (HLDMDVEDRV…INSVIRLERD (78 aa)) is the ACT domain.

Belongs to the homoserine dehydrogenase family. Requires a metal cation as cofactor.

The enzyme catalyses L-homoserine + NADP(+) = L-aspartate 4-semialdehyde + NADPH + H(+). It carries out the reaction L-homoserine + NAD(+) = L-aspartate 4-semialdehyde + NADH + H(+). It participates in amino-acid biosynthesis; L-methionine biosynthesis via de novo pathway; L-homoserine from L-aspartate: step 3/3. Its pathway is amino-acid biosynthesis; L-threonine biosynthesis; L-threonine from L-aspartate: step 3/5. Its activity is regulated as follows. Feedback inhibition by threonine. Catalyzes the conversion of L-aspartate-beta-semialdehyde (L-Asa) to L-homoserine (L-Hse), the third step in the biosynthesis of threonine and methionine from aspartate. The sequence is that of Homoserine dehydrogenase (hom) from Corynebacterium glutamicum (strain ATCC 13032 / DSM 20300 / JCM 1318 / BCRC 11384 / CCUG 27702 / LMG 3730 / NBRC 12168 / NCIMB 10025 / NRRL B-2784 / 534).